A 349-amino-acid polypeptide reads, in one-letter code: Protein-glutamate methylesterase/protein-glutamine glutaminase (349 aa).

Residues 5–122 (RVLSVDDSAL…REGMLAYSEM (118 aa)) form the Response regulatory domain. At aspartate 56 the chain carries 4-aspartylphosphate. One can recognise a CheB-type methylesterase domain in the interval 152–344 (LLSSEKLIAI…QQMLAKISAG (193 aa)). Catalysis depends on residues serine 164, histidine 190, and aspartate 286.

The protein belongs to the CheB family. Phosphorylated by CheA. Phosphorylation of the N-terminal regulatory domain activates the methylesterase activity.

Its subcellular location is the cytoplasm. The catalysed reaction is [protein]-L-glutamate 5-O-methyl ester + H2O = L-glutamyl-[protein] + methanol + H(+). It carries out the reaction L-glutaminyl-[protein] + H2O = L-glutamyl-[protein] + NH4(+). Functionally, involved in chemotaxis. Part of a chemotaxis signal transduction system that modulates chemotaxis in response to various stimuli. Catalyzes the demethylation of specific methylglutamate residues introduced into the chemoreceptors (methyl-accepting chemotaxis proteins or MCP) by CheR. Also mediates the irreversible deamidation of specific glutamine residues to glutamic acid. The protein is Protein-glutamate methylesterase/protein-glutamine glutaminase of Escherichia coli O6:K15:H31 (strain 536 / UPEC).